The following is a 414-amino-acid chain: UDP-N-acetylmuramoylalanine--D-glutamate ligase (414 aa).

104 to 110 is a binding site for ATP; it reads GSNGKST.

The protein belongs to the MurCDEF family.

The protein resides in the cytoplasm. The catalysed reaction is UDP-N-acetyl-alpha-D-muramoyl-L-alanine + D-glutamate + ATP = UDP-N-acetyl-alpha-D-muramoyl-L-alanyl-D-glutamate + ADP + phosphate + H(+). It participates in cell wall biogenesis; peptidoglycan biosynthesis. In terms of biological role, cell wall formation. Catalyzes the addition of glutamate to the nucleotide precursor UDP-N-acetylmuramoyl-L-alanine (UMA). In Francisella philomiragia subsp. philomiragia (strain ATCC 25017 / CCUG 19701 / FSC 153 / O#319-036), this protein is UDP-N-acetylmuramoylalanine--D-glutamate ligase.